The following is a 345-amino-acid chain: MARPGQRWLSKWLVAMVVLTLCRLATPLAKNLEPVSWSSLNPKFLSGKGLVIYPKIGDKLDIICPRAEAGRPYEYYKLYLVRPEQAAACSTVLDPNVLVTCNKPHQEIRFTIKFQEFSPNYMGLEFKKYHDYYITSTSNGSLEGLENREGGVCRTRTMKIVMKVGQDPNAVTPEQLTTSRPSKESDNTVKTATQAPGRGSQGDSDGKHETVNQEEKSGPGAGGGGSGDSDSFFNSKVALFAAVGAGCVIFLLIIIFLTVLLLKLRKRHRKHTQQRAAALSLSTLASPKGGSGTAGTEPSDIIIPLRTTENNYCPHYEKVSGDYGHPVYIVQEMPPQSPANIYYKV.

The N-terminal stretch at 1-24 is a signal peptide; the sequence is MARPGQRWLSKWLVAMVVLTLCRL. The Extracellular segment spans residues 25–236; sequence ATPLAKNLEP…GDSDSFFNSK (212 aa). An Ephrin RBD domain is found at 30-164; it reads KNLEPVSWSS…TRTMKIVMKV (135 aa). Disulfide bonds link Cys-64–Cys-101 and Cys-89–Cys-153. N-linked (GlcNAc...) asparagine glycosylation is present at Asn-139. Positions 169-227 are disordered; it reads NAVTPEQLTTSRPSKESDNTVKTATQAPGRGSQGDSDGKHETVNQEEKSGPGAGGGGSG. The segment covering 204-217 has biased composition (basic and acidic residues); the sequence is SDGKHETVNQEEKS. The helical transmembrane segment at 237–257 threads the bilayer; that stretch reads VALFAAVGAGCVIFLLIIIFL. Residues 258-345 lie on the Cytoplasmic side of the membrane; it reads TVLLLKLRKR…QSPANIYYKV (88 aa). The Nuclear localization signal signature appears at 259 to 272; it reads VLLLKLRKRHRKHT. The interval 262 to 293 is interaction with ZHX2; that stretch reads LKLRKRHRKHTQQRAAALSLSTLASPKGGSGT. Residues Ser-280 and Ser-286 each carry the phosphoserine modification. The short motif at 343–345 is the PDZ-binding element; the sequence is YKV.

Belongs to the ephrin family. Interacts (via PDZ-binding motif) with GRIP1 and GRIP2 (via PDZ domain 6). Interacts with TLE1. The intracellular domain peptide interacts with ZHX2; the interaction enhances ZHX2 transcriptional repression activity. Inducible phosphorylation of tyrosine residues in the cytoplasmic domain. In terms of processing, proteolytically processed. The ectodomain is cleaved, probably by a metalloprotease, to produce a membrane-tethered C-terminal fragment. This fragment is then further processed by the gamma-secretase complex to yield a soluble intracellular domain peptide which can translocate to the nucleus. The intracellular domain peptide is highly labile suggesting that it is targeted for degradation by the proteasome. In terms of tissue distribution, expressed on lateral floor plate cells, specifically on commissural axon segments that have passed through the floor plate. Expressed in cells of the retinal ganglion cell layer during retinal axon guidance to the optic disk. Expressed in myogenic progenitor cells.

The protein localises to the cell membrane. It localises to the membrane raft. It is found in the nucleus. In terms of biological role, cell surface transmembrane ligand for Eph receptors, a family of receptor tyrosine kinases which are crucial for migration, repulsion and adhesion during neuronal, vascular and epithelial development. Binding to Eph receptors residing on adjacent cells leads to contact-dependent bidirectional signaling into neighboring cells. Shows high affinity for the receptor tyrosine kinase EPHB1/ELK. Can also bind EPHB2 and EPHB3. Binds to, and induces the collapse of, commissural axons/growth cones in vitro. May play a role in constraining the orientation of longitudinally projecting axons. The chain is Ephrin-B1 (Efnb1) from Mus musculus (Mouse).